The following is a 214-amino-acid chain: GTP-binding nuclear protein GSP1 (214 aa).

One can recognise a Small GTPase Ran-type domain in the interval 4–172; that stretch reads RELTYKICLI…LHLARIFTGR (169 aa). 17–22 is a binding site for GTP; that stretch reads GVGKTT. Residues 34–42 are switch-I; it reads KNYNATVGA. GTP contacts are provided by residues Gly66, 121-124, and 151-153; these read NKID and SAK. Residues 66-82 are switch-II; it reads GQEKKAVLKDVYYIGAS.

It belongs to the small GTPase superfamily. Ran family. Found in a nuclear export complex with RanGTP, exportin and pre-miRNA.

It localises to the nucleus. In terms of biological role, GTP-binding protein involved in nucleocytoplasmic transport. Required for the import of protein into the nucleus and also for RNA export. In Encephalitozoon cuniculi (strain GB-M1) (Microsporidian parasite), this protein is GTP-binding nuclear protein GSP1 (GSP1).